A 288-amino-acid polypeptide reads, in one-letter code: Elongation factor Ts (288 aa).

Residues 82 to 85 (TDFV) are involved in Mg(2+) ion dislocation from EF-Tu.

Belongs to the EF-Ts family.

It localises to the cytoplasm. Associates with the EF-Tu.GDP complex and induces the exchange of GDP to GTP. It remains bound to the aminoacyl-tRNA.EF-Tu.GTP complex up to the GTP hydrolysis stage on the ribosome. This Chlorobium luteolum (strain DSM 273 / BCRC 81028 / 2530) (Pelodictyon luteolum) protein is Elongation factor Ts.